Here is a 440-residue protein sequence, read N- to C-terminus: MAGVSPAVFGCPDVTLGRNTAVREVQENVTSVDSLTLVSSNTDFAFSLYRKLVLKNPDENVVFSPFSICTALALLSLGAKSNTLKEILEGLKFNLTETPEPDIHQGFRYLLDLLSQPGNQVQISTGSALFIEKHLQILAEFKEKARALYQAEAFTADFQQPLKATKLINDYVSNHTQGKIKELISGLKESTLMVLVNYIYFKGKWKNPFDPNDTFKSEFYLDEKRSVIVSMMKTGYLTTPYFRDEELSCTVVELKYTGNASAMFILPDQGRMQQVEASLQPETLRKWKNSLKPRMIHELRLPKFSISTDYSLEHILPELGIREVFSTQADLSAITGTKDLRVSQVVHKAVLDVAETGTEAAAATGMAGVGCCAVFDFLEIFFNRPFLMIISDTKAHIALFMAKVTNPERSMNFPNGEGASSQRLESKRLCFGDPLCLIGQ.

The segment at 357-382 (GTEAAAATGMAGVGCCAVFDFLEIFF) is RCL.

Belongs to the serpin family. As to expression, expressed in bone marrow (particularly hematopoietic stem cells), heart, kidney, liver, lung, skeletal muscle, spleen, testis, thymus and T-cells.

The protein resides in the cytoplasm. Its subcellular location is the nucleus. Functionally, serine and cysteine protease inhibitor. Can inhibit lysosomal papain-like proteases including the cathepsins B, G, H, K, L and V. Ineffective against elastase, granzyme A, granzyme B, or caspases 3, 8 or 9. Inhibition of cytoplasmic cathepsin B following release from the lysosome may protect cells from apoptosis. This may facilitate the survival of progenitor T-cells and the subsequent development of long term memory CD8 T-cells. The chain is Serine protease inhibitor A3G (Serpina3g) from Mus musculus (Mouse).